Here is a 160-residue protein sequence, read N- to C-terminus: Large ribosomal subunit protein uL10 (160 aa).

It belongs to the universal ribosomal protein uL10 family. Part of the ribosomal stalk of the 50S ribosomal subunit. The N-terminus interacts with L11 and the large rRNA to form the base of the stalk. The C-terminus forms an elongated spine to which L12 dimers bind in a sequential fashion forming a multimeric L10(L12)X complex.

Functionally, forms part of the ribosomal stalk, playing a central role in the interaction of the ribosome with GTP-bound translation factors. The polypeptide is Large ribosomal subunit protein uL10 (Wolinella succinogenes (strain ATCC 29543 / DSM 1740 / CCUG 13145 / JCM 31913 / LMG 7466 / NCTC 11488 / FDC 602W) (Vibrio succinogenes)).